Reading from the N-terminus, the 1399-residue chain is DNA-directed RNA polymerase subunit beta' (1399 aa).

The Zn(2+) site is built by C70, C72, C85, and C88. The Mg(2+) site is built by D460, D462, and D464. Positions 814, 888, 895, and 898 each coordinate Zn(2+). Residues 1367–1399 (SERKRQRDLGKPQRVSASEAEAALTEALNSSGN) form a disordered region. Residues 1382 to 1399 (SASEAEAALTEALNSSGN) are compositionally biased toward low complexity.

This sequence belongs to the RNA polymerase beta' chain family. As to quaternary structure, the RNAP catalytic core consists of 2 alpha, 1 beta, 1 beta' and 1 omega subunit. When a sigma factor is associated with the core the holoenzyme is formed, which can initiate transcription. The cofactor is Mg(2+). Requires Zn(2+) as cofactor.

The enzyme catalyses RNA(n) + a ribonucleoside 5'-triphosphate = RNA(n+1) + diphosphate. Its function is as follows. DNA-dependent RNA polymerase catalyzes the transcription of DNA into RNA using the four ribonucleoside triphosphates as substrates. This Pseudomonas paraeruginosa (strain DSM 24068 / PA7) (Pseudomonas aeruginosa (strain PA7)) protein is DNA-directed RNA polymerase subunit beta'.